Consider the following 377-residue polypeptide: Guanine nucleotide-binding protein subunit alpha-13 (377 aa).

2 S-palmitoyl cysteine lipidation sites follow: C14 and C18. One can recognise a G-alpha domain in the interval 47 to 377 (RLVKILLLGA…HDNLKQLMLQ (331 aa)). The segment at 50–63 (KILLLGAGESGKST) is G1 motif. GTP contacts are provided by residues 58–63 (ESGKST), S173, and 197–200 (LLAR). S62 is a binding site for Mg(2+). Residues 195-203 (DILLARRPT) are G2 motif. T203 is a binding site for Mg(2+). Residue T203 is modified to Phosphothreonine; by PKA. Residues 218-227 (FKMVDVGGQR) are G3 motif. The interval 287-294 (ILFLNKTD) is G4 motif. Residues 291 to 294 (NKTD) and A349 each bind GTP. Residues 347–352 (TTAINT) are G5 motif.

Belongs to the G-alpha family. G(12) subfamily. As to quaternary structure, g proteins are composed of 3 units; alpha, beta and gamma. The alpha chain contains the guanine nucleotide binding site. Interacts with UBXD5. Interacts with HAX1. Interacts (in GTP-bound form) with PPP5C (via TPR repeats); activates PPP5C phosphatase activity and translocates PPP5C to the cell membrane. Interacts with RGS22. Interacts with ARHGEF1. Interacts (in GTP-bound form) with ARHGEF11 (via RGS domain). Interacts (in GTP-bound form) with ARHGEF12 (via RGS domain). Interacts (in GTP-bound form) with CTNND1. Interacts with GAS2L2. Interacts with GPR35. Interacts with GPR174. Palmitoylation is critical for proper membrane localization and signaling. Post-translationally, phosphorylation on Thr-203 by PKA destabilizes the heterotrimer of alpha, beta and gamma, and inhibits Rho activation.

It localises to the membrane. The protein localises to the melanosome. It is found in the cytoplasm. Its subcellular location is the nucleus. Guanine nucleotide-binding proteins (G proteins) are involved as modulators or transducers in various transmembrane signaling systems. Activates effector molecule RhoA by binding and activating RhoGEFs (ARHGEF1/p115RhoGEF, ARHGEF11/PDZ-RhoGEF and ARHGEF12/LARG). GNA13-dependent Rho signaling subsequently regulates transcription factor AP-1 (activating protein-1). Promotes tumor cell invasion and metastasis by activating RhoA/ROCK signaling pathway. Inhibits CDH1-mediated cell adhesion in process independent from Rho activation. In lymphoid follicles, transmits P2RY8- and S1PR2-dependent signals that lead to inhibition of germinal center (GC) B cell growth and migration outside the GC niche. The polypeptide is Guanine nucleotide-binding protein subunit alpha-13 (Gna13) (Rattus norvegicus (Rat)).